The primary structure comprises 140 residues: Large ribosomal subunit protein uL11 (140 aa).

The protein belongs to the universal ribosomal protein uL11 family. As to quaternary structure, part of the ribosomal stalk of the 50S ribosomal subunit. Interacts with L10 and the large rRNA to form the base of the stalk. L10 forms an elongated spine to which L12 dimers bind in a sequential fashion forming a multimeric L10(L12)X complex. Post-translationally, one or more lysine residues are methylated.

Its function is as follows. Forms part of the ribosomal stalk which helps the ribosome interact with GTP-bound translation factors. The polypeptide is Large ribosomal subunit protein uL11 (Thermoanaerobacter pseudethanolicus (strain ATCC 33223 / 39E) (Clostridium thermohydrosulfuricum)).